Here is a 164-residue protein sequence, read N- to C-terminus: Phosphopantetheine adenylyltransferase (164 aa).

S9 is a substrate binding site. Residues 9–10 and H17 each bind ATP; that span reads SF. 3 residues coordinate substrate: K41, L73, and K87. Residues 88 to 90, E98, and 123 to 129 contribute to the ATP site; these read GLR and YSYLSSS.

It belongs to the bacterial CoaD family. Homohexamer. The cofactor is Mg(2+).

Its subcellular location is the cytoplasm. The enzyme catalyses (R)-4'-phosphopantetheine + ATP + H(+) = 3'-dephospho-CoA + diphosphate. It participates in cofactor biosynthesis; coenzyme A biosynthesis; CoA from (R)-pantothenate: step 4/5. In terms of biological role, reversibly transfers an adenylyl group from ATP to 4'-phosphopantetheine, yielding dephospho-CoA (dPCoA) and pyrophosphate. The sequence is that of Phosphopantetheine adenylyltransferase from Clostridium botulinum (strain ATCC 19397 / Type A).